Here is a 483-residue protein sequence, read N- to C-terminus: NADH-quinone oxidoreductase subunit N (483 aa).

A run of 13 helical transmembrane segments spans residues 9–29 (LVLPEVILGVSALVLLVWGAF), 35–55 (PLFTGAAVLALLGAAVAAVVG), 69–89 (AAATYAKVAIYLSSAVAIVLG), 104–124 (AVLVILAAVGMGVTASAGDLI), 158–178 (FVLGALSSGLLLYGASLIYGF), 201–221 (VGLLFGLVFLICGLAFKVSAA), 234–254 (APTSVVGFFAAAPKLAAMMMF), 272–292 (VLIIASLASVFVGAFAGLAQT), 297–317 (LWAYSSIANVGYALLGVATGG), 325–345 (LLFMTLYMVDVTGFFACLQAL), 368–388 (IAVAMTAFSLSALGMPPFSGF), 404–424 (VLLQWAAVLGLVGSVVAAFYY), and 449–469 (AVGFAAALFSFPVVMVALIWL).

This sequence belongs to the complex I subunit 2 family. As to quaternary structure, NDH-1 is composed of 14 different subunits. Subunits NuoA, H, J, K, L, M, N constitute the membrane sector of the complex.

The protein resides in the cell inner membrane. It carries out the reaction a quinone + NADH + 5 H(+)(in) = a quinol + NAD(+) + 4 H(+)(out). NDH-1 shuttles electrons from NADH, via FMN and iron-sulfur (Fe-S) centers, to quinones in the respiratory chain. The immediate electron acceptor for the enzyme in this species is believed to be ubiquinone. Couples the redox reaction to proton translocation (for every two electrons transferred, four hydrogen ions are translocated across the cytoplasmic membrane), and thus conserves the redox energy in a proton gradient. The polypeptide is NADH-quinone oxidoreductase subunit N (Caulobacter sp. (strain K31)).